The sequence spans 79 residues: uncharacterized protein (79 aa).

A helical transmembrane segment spans residues 53 to 73; the sequence is LFFAYMVAYIGFGILSIGMIV.

The protein localises to the membrane. This is an uncharacterized protein from Escherichia coli O157:H7.